The chain runs to 708 residues: Leucine-rich repeat neuronal protein 3 (708 aa).

Residues 1–22 form the signal peptide; sequence MKDMPLQIHVLLGLAITTLVQA. The region spanning 23 to 69 is the LRRNT domain; that stretch reads VDKKVDCPQLCTCEIRPWFTPTSIYMEASTVDCNDLGLLTFPARLPA. Topologically, residues 23–628 are extracellular; it reads VDKKVDCPQL…KEYEKSNTTT (606 aa). LRR repeat units lie at residues 70 to 91, 93 to 114, 117 to 138, 141 to 162, 165 to 186, 189 to 210, 213 to 234, 237 to 258, 261 to 282, 285 to 304, 310 to 332, and 335 to 358; these read NTQI…TDFP, NLTG…NVKK, QLLS…CLSE, NLQE…AFIG, NLLR…WFDA, NLEI…NFKP, NLRS…ALVG, NLES…ALQK, NLKF…DFSN, HLKE…DSLA, DLRK…AFFR, and KLES…ESLP. N-linked (GlcNAc...) asparagine glycans are attached at residues Asn93 and Asn103. An N-linked (GlcNAc...) asparagine glycan is attached at Asn223. Residues 368–421 form the LRRCT domain; the sequence is NPIRCDCVIRWINMNKTNIRFMEPDSLFCVDPPEFQGQNVRQVHFRDMMEICLP. Asn382 is a glycosylation site (N-linked (GlcNAc...) asparagine). One can recognise an Ig-like C2-type domain in the interval 421-514; it reads PLIAPESFPS…DLKSVMIKVD (94 aa). Cys444 and Cys496 are joined by a disulfide. Asn522, Asn579, Asn608, and Asn625 each carry an N-linked (GlcNAc...) asparagine glycan. One can recognise a Fibronectin type-III domain in the interval 523–617; it reads GSLNIKIRDI…NVTTKGLDPD (95 aa). Residues 629 to 649 traverse the membrane as a helical segment; that stretch reads LMACLGGLLGIIGVICLISCL. Residues 650 to 708 are Cytoplasmic-facing; the sequence is SPEMNCDGGHSYVRNYLQKPTFALGELYPPLINLWEAGKEKSTSLKVKATVIGLPTNMS.

Its subcellular location is the membrane. The chain is Leucine-rich repeat neuronal protein 3 (LRRN3) from Pongo abelii (Sumatran orangutan).